Consider the following 563-residue polypeptide: MSDFVDRVTVHVKGGDGGNGSAGIRREKYKPLAGPNGGNGGDGGSVVFVADRNATSLLDYRFMPHRVAGSGTMGLGDNKDGSKGEDLILPVPCGTVVFEARGEQGKAKHPGAQLADLRHEGDRCVVAQGGAGGLGNIALANKTRRAPGFALLGELGEERDVILELKSIADVALVGFPSAGKSSLIAAMSSAKPKIADYPFTTLVPNLGVVIAGDSRYTIADVPGLIPGASEGKGLGLEFLRHIERTEIIAHVIDCATLEPDRDPMSDYHALENELALYADKLELPLGAIPIPERPRIVILNKIDVPEAKELAEFVRPEFEKLGLKVFEISTASHEGLKELNFALSALVHEMREEVANREQAEEEARVVIKPLETKGRRPRRADEGGSALEFTVERRELGNGEVFFEVRGVKPERWVMQTNFDNDEAVGYLADRLAKLGVEDELRRKGAHPGDEVRIGRGARMVEFDWDPTISAGAEMLDGSNLGARGKDLRLEELDPRTHRRSNAERRAQYHEMMDARAAVRDAMMAERKAGHWADPTVDDDRHDETSLFGHGESSEDGETEE.

The Obg domain maps to 2-168; sequence SDFVDRVTVH…RDVILELKSI (167 aa). The region spanning 169–349 is the OBG-type G domain; that stretch reads ADVALVGFPS…LNFALSALVH (181 aa). Residues 175–182, 200–204, 221–224, 301–304, and 330–332 each bind GTP; these read GFPSAGKS, FTTLV, DVPG, NKID, and STA. 2 residues coordinate Mg(2+): serine 182 and threonine 202. The 87-residue stretch at 383–469 folds into the OCT domain; the sequence is DEGGSALEFT…ARMVEFDWDP (87 aa). Residues 529–563 are disordered; it reads RKAGHWADPTVDDDRHDETSLFGHGESSEDGETEE.

The protein belongs to the TRAFAC class OBG-HflX-like GTPase superfamily. OBG GTPase family. In terms of assembly, monomer. Mg(2+) serves as cofactor.

The protein resides in the cytoplasm. An essential GTPase which binds GTP, GDP and possibly (p)ppGpp with moderate affinity, with high nucleotide exchange rates and a fairly low GTP hydrolysis rate. Plays a role in control of the cell cycle, stress response, ribosome biogenesis and in those bacteria that undergo differentiation, in morphogenesis control. In Bifidobacterium longum (strain NCC 2705), this protein is GTPase Obg.